The primary structure comprises 708 residues: Putative adhesion G protein-coupled receptor F2P (708 aa).

At 1 to 451 (MGLTAYGNRR…ESLILTYITY (451 aa)) the chain is on the extracellular side. N-linked (GlcNAc...) asparagine glycans are attached at residues Asn21, Asn220, Asn252, Asn260, Asn305, Asn313, and Asn358. The 150-residue stretch at 293–442 (MGTTISGDNI…SILMSPHILE (150 aa)) folds into the GAIN-B domain. 2 disulfides stabilise this stretch: Cys394–Cys421 and Cys409–Cys423. Positions 394 to 442 (CVGWHSVENRWDQQACKMIQENSQQAVCKCRPSKLFTSFSILMSPHILE) are GPS. The helical transmembrane segment at 452 to 472 (VGLGISICSLILCLSIEVLVW) threads the bilayer. Topologically, residues 473 to 487 (SQVTKTEITYLRHVC) are cytoplasmic. The helical transmembrane segment at 488–508 (IVNIAATLLMADVWFIVASFL) threads the bilayer. Topologically, residues 509–530 (SGPITHHKGCVAATFFVHFFYL) are extracellular. The chain crosses the membrane as a helical span at residues 531-551 (SVFFWMLAKALLILYGIMIVF). Residues 552-557 (HTLPKS) lie on the Cytoplasmic side of the membrane. Residues 558-578 (VLVASLFSVGYGCPLAIAAIT) form a helical membrane-spanning segment. At 579–606 (VAATEPGKGYLRPEICWLNWDMTKALLA) the chain is on the extracellular side. The helical transmembrane segment at 607–627 (FVIPALAIVVVNLITVTLVIV) threads the bilayer. The Cytoplasmic portion of the chain corresponds to 628–650 (KTQRAAIGNSMFQEVRAIVRISK). Residues 651-671 (NIAILTPLLGLTWGFGVATVI) traverse the membrane as a helical segment. Topologically, residues 672–674 (DDR) are extracellular. The chain crosses the membrane as a helical span at residues 675 to 695 (SLAFHIIFSLLNAFQVSPDAS). At 696–708 (DQVQSERIHEDVL) the chain is on the cytoplasmic side.

It belongs to the G-protein coupled receptor 2 family. Adhesion G-protein coupled receptor (ADGR) subfamily. As to expression, high expression in kidney. Up-regulated in lung adenocarcinomas and prostate cancers.

It localises to the membrane. Functionally, orphan receptor. This is Putative adhesion G protein-coupled receptor F2P from Homo sapiens (Human).